The chain runs to 334 residues: Serine/threonine-protein kinase (334 aa).

Residues 53-333 (FEVLQPLQSG…DEILNFGMWT (281 aa)) form the Protein kinase domain. ATP-binding positions include 59-67 (LQSGSEGRV) and K82. The Proton acceptor role is filled by D167.

The protein belongs to the protein kinase superfamily. Ser/Thr protein kinase family.

The enzyme catalyses L-seryl-[protein] + ATP = O-phospho-L-seryl-[protein] + ADP + H(+). The catalysed reaction is L-threonyl-[protein] + ATP = O-phospho-L-threonyl-[protein] + ADP + H(+). Able to phosphorylate in vitro the major virion phosphoprotein phosphorylated in vivo. The chain is Serine/threonine-protein kinase (PK) from Sus scrofa (Pig).